Consider the following 363-residue polypeptide: Ribosomal RNA large subunit methyltransferase M (363 aa).

Residues S194, 227–230, D246, D266, and D284 contribute to the S-adenosyl-L-methionine site; that span reads CPGG. Catalysis depends on K313, which acts as the Proton acceptor.

The protein belongs to the class I-like SAM-binding methyltransferase superfamily. RNA methyltransferase RlmE family. RlmM subfamily. Monomer.

Its subcellular location is the cytoplasm. The enzyme catalyses cytidine(2498) in 23S rRNA + S-adenosyl-L-methionine = 2'-O-methylcytidine(2498) in 23S rRNA + S-adenosyl-L-homocysteine + H(+). Functionally, catalyzes the 2'-O-methylation at nucleotide C2498 in 23S rRNA. The sequence is that of Ribosomal RNA large subunit methyltransferase M from Mannheimia succiniciproducens (strain KCTC 0769BP / MBEL55E).